Consider the following 319-residue polypeptide: tRNA uridine(34) hydroxylase (319 aa).

The region spanning 127-221 (KQEDTVIIDA…YGKDPEVQGE (95 aa)) is the Rhodanese domain. Cysteine 181 acts as the Cysteine persulfide intermediate in catalysis.

It belongs to the TrhO family.

It carries out the reaction uridine(34) in tRNA + AH2 + O2 = 5-hydroxyuridine(34) in tRNA + A + H2O. In terms of biological role, catalyzes oxygen-dependent 5-hydroxyuridine (ho5U) modification at position 34 in tRNAs. The chain is tRNA uridine(34) hydroxylase from Bacillus cereus (strain ZK / E33L).